Here is a 270-residue protein sequence, read N- to C-terminus: Tryptophan synthase alpha chain (270 aa).

Residues Glu49 and Asp60 each act as proton acceptor in the active site.

This sequence belongs to the TrpA family. As to quaternary structure, tetramer of two alpha and two beta chains.

It carries out the reaction (1S,2R)-1-C-(indol-3-yl)glycerol 3-phosphate + L-serine = D-glyceraldehyde 3-phosphate + L-tryptophan + H2O. It functions in the pathway amino-acid biosynthesis; L-tryptophan biosynthesis; L-tryptophan from chorismate: step 5/5. In terms of biological role, the alpha subunit is responsible for the aldol cleavage of indoleglycerol phosphate to indole and glyceraldehyde 3-phosphate. The polypeptide is Tryptophan synthase alpha chain (Paraburkholderia phytofirmans (strain DSM 17436 / LMG 22146 / PsJN) (Burkholderia phytofirmans)).